Here is a 766-residue protein sequence, read N- to C-terminus: Nucleolar complex protein 2 (766 aa).

Basic residues predominate over residues 1 to 12 (MKLATKKIKTLG). Disordered regions lie at residues 1 to 73 (MKLA…EELE), 100 to 154 (DTDD…DEED), and 674 to 766 (KTGV…LNEW). Positions 14 to 29 (SKPDLSKKKPAKDAIR) are enriched in basic and acidic residues. Polar residues predominate over residues 33-42 (PQTTSETKVT). The span at 58-67 (KTTKKGFKKS) shows a compositional bias: basic residues. A compositionally biased stretch (acidic residues) spans 100 to 115 (DTDDDDDEEGDEEDKE). Thr101 bears the Phosphothreonine mark. Residues 130-140 (EKYHKPSKDLE) show a composition bias toward basic and acidic residues. Acidic residues predominate over residues 141–154 (VASDESDFEVDEED). Ser143, Ser146, Ser691, Ser693, and Ser705 each carry phosphoserine. Acidic residues predominate over residues 706–720 (DDDDDEDVQEEEEVE). The span at 757-766 (IVKDLDLNEW) shows a compositional bias: basic and acidic residues.

This sequence belongs to the NOC2 family.

It is found in the nucleus. This Drosophila melanogaster (Fruit fly) protein is Nucleolar complex protein 2.